The chain runs to 285 residues: SLAM family member 9 (285 aa).

An N-terminal signal peptide occupies residues 1 to 17; it reads MGALLWSLLLLLQEAKG. At 18-232 the chain is on the extracellular side; it reads FSGDDEDPEE…YPEKPSMLCL (215 aa). Residues 25–126 enclose the Ig-like V-type domain; sequence PEEVIGVLQE…SHITKSYHLR (102 aa). N-linked (GlcNAc...) asparagine glycosylation is found at Asn-37, Asn-97, Asn-141, Asn-149, Asn-175, and Asn-206. The region spanning 134–213 is the Ig-like C2-type domain; it reads PHITVNSNIS…VSNISSRRIS (80 aa). A disulfide bridge links Cys-154 with Cys-198. A helical membrane pass occupies residues 233 to 253; it reads LVKSLFLLLLLAILTVGLCLF. Residues 254–285 lie on the Cytoplasmic side of the membrane; the sequence is RAQKSYETPRVRKLKRNRIKLRKKGKSGPTPV.

It is found in the membrane. Functionally, may play a role in the immune response. The sequence is that of SLAM family member 9 (Slamf9) from Mus musculus (Mouse).